We begin with the raw amino-acid sequence, 177 residues long: uncharacterized protein (177 aa).

The span at Gln100–His115 shows a compositional bias: low complexity. The tract at residues Gln100–Lys135 is disordered. A helical transmembrane segment spans residues Trp141 to Tyr158.

The protein localises to the membrane. This is an uncharacterized protein from Aedes vexans (Inland floodwater mosquito).